A 407-amino-acid chain; its full sequence is Geranylgeranyl diphosphate reductase (407 aa).

The protein belongs to the geranylgeranyl reductase family. ChlP subfamily.

It carries out the reaction phytyl diphosphate + 3 NADP(+) = geranylgeranyl diphosphate + 3 NADPH + 3 H(+). It functions in the pathway porphyrin-containing compound metabolism; chlorophyll biosynthesis. Its function is as follows. Catalyzes the stepwise hydrogenation of geranylgeraniol to phytol during chlorophyll A (ChlA) biosynthesis. In Synechocystis sp. (strain ATCC 27184 / PCC 6803 / Kazusa), this protein is Geranylgeranyl diphosphate reductase (chlP).